Reading from the N-terminus, the 286-residue chain is Ribose-phosphate pyrophosphokinase (286 aa).

ATP contacts are provided by residues 34–36 and 91–93; these read DGE and RQH. Positions 124 and 161 each coordinate Mg(2+). Lys-184 is a catalytic residue. Residues Arg-186, Asp-210, and 214–218 each bind D-ribose 5-phosphate; that span reads STGGT.

This sequence belongs to the ribose-phosphate pyrophosphokinase family. Class III (archaeal) subfamily. Homodimer. The cofactor is Mg(2+).

The protein resides in the cytoplasm. The catalysed reaction is D-ribose 5-phosphate + ATP = 5-phospho-alpha-D-ribose 1-diphosphate + AMP + H(+). Its pathway is metabolic intermediate biosynthesis; 5-phospho-alpha-D-ribose 1-diphosphate biosynthesis; 5-phospho-alpha-D-ribose 1-diphosphate from D-ribose 5-phosphate (route I): step 1/1. In terms of biological role, involved in the biosynthesis of the central metabolite phospho-alpha-D-ribosyl-1-pyrophosphate (PRPP) via the transfer of pyrophosphoryl group from ATP to 1-hydroxyl of ribose-5-phosphate (Rib-5-P). The protein is Ribose-phosphate pyrophosphokinase of Thermoplasma volcanium (strain ATCC 51530 / DSM 4299 / JCM 9571 / NBRC 15438 / GSS1).